A 476-amino-acid polypeptide reads, in one-letter code: Adenosylhomocysteinase (476 aa).

Thr-67, Asp-142, and Glu-202 together coordinate substrate. Position 203-205 (Thr-203–Thr-205) interacts with NAD(+). Positions 232 and 236 each coordinate substrate. Residues Asn-237, Gly-266–Gly-271, Glu-289, Asn-324, Ile-345–His-347, and Asn-390 contribute to the NAD(+) site.

This sequence belongs to the adenosylhomocysteinase family. It depends on NAD(+) as a cofactor.

The protein resides in the cytoplasm. It catalyses the reaction S-adenosyl-L-homocysteine + H2O = L-homocysteine + adenosine. It functions in the pathway amino-acid biosynthesis; L-homocysteine biosynthesis; L-homocysteine from S-adenosyl-L-homocysteine: step 1/1. In terms of biological role, may play a key role in the regulation of the intracellular concentration of adenosylhomocysteine. This is Adenosylhomocysteinase from Synechococcus sp. (strain CC9902).